A 176-amino-acid chain; its full sequence is Inorganic pyrophosphatase (176 aa).

The substrate site is built by lysine 30, arginine 44, and tyrosine 56. The Mg(2+) site is built by aspartate 66, aspartate 71, and aspartate 103. Tyrosine 140 contacts substrate.

Belongs to the PPase family. In terms of assembly, homohexamer. Mg(2+) is required as a cofactor.

The protein resides in the cytoplasm. The enzyme catalyses diphosphate + H2O = 2 phosphate + H(+). In terms of biological role, catalyzes the hydrolysis of inorganic pyrophosphate (PPi) forming two phosphate ions. This chain is Inorganic pyrophosphatase, found in Methanothermobacter thermautotrophicus (strain ATCC 29096 / DSM 1053 / JCM 10044 / NBRC 100330 / Delta H) (Methanobacterium thermoautotrophicum).